Consider the following 409-residue polypeptide: Phosphopentomutase (409 aa).

6 residues coordinate Mn(2+): D10, D308, H313, D349, H350, and H361.

Belongs to the phosphopentomutase family. Requires Mn(2+) as cofactor.

The protein resides in the cytoplasm. It carries out the reaction 2-deoxy-alpha-D-ribose 1-phosphate = 2-deoxy-D-ribose 5-phosphate. It catalyses the reaction alpha-D-ribose 1-phosphate = D-ribose 5-phosphate. The protein operates within carbohydrate degradation; 2-deoxy-D-ribose 1-phosphate degradation; D-glyceraldehyde 3-phosphate and acetaldehyde from 2-deoxy-alpha-D-ribose 1-phosphate: step 1/2. Isomerase that catalyzes the conversion of deoxy-ribose 1-phosphate (dRib-1-P) and ribose 1-phosphate (Rib-1-P) to deoxy-ribose 5-phosphate (dRib-5-P) and ribose 5-phosphate (Rib-5-P), respectively. The chain is Phosphopentomutase from Buchnera aphidicola subsp. Schizaphis graminum (strain Sg).